Reading from the N-terminus, the 292-residue chain is Elongation factor Ts (292 aa).

Residues 80 to 83 (TDFV) form an involved in Mg(2+) ion dislocation from EF-Tu region.

The protein belongs to the EF-Ts family.

It is found in the cytoplasm. Functionally, associates with the EF-Tu.GDP complex and induces the exchange of GDP to GTP. It remains bound to the aminoacyl-tRNA.EF-Tu.GTP complex up to the GTP hydrolysis stage on the ribosome. The protein is Elongation factor Ts of Tolumonas auensis (strain DSM 9187 / NBRC 110442 / TA 4).